A 143-amino-acid chain; its full sequence is Nucleoside diphosphate kinase (143 aa).

Positions 11, 59, 87, 93, 104, and 114 each coordinate ATP. Histidine 117 acts as the Pros-phosphohistidine intermediate in catalysis.

The protein belongs to the NDK family. In terms of assembly, homotetramer. It depends on Mg(2+) as a cofactor.

The protein resides in the cytoplasm. The enzyme catalyses a 2'-deoxyribonucleoside 5'-diphosphate + ATP = a 2'-deoxyribonucleoside 5'-triphosphate + ADP. The catalysed reaction is a ribonucleoside 5'-diphosphate + ATP = a ribonucleoside 5'-triphosphate + ADP. Its function is as follows. Major role in the synthesis of nucleoside triphosphates other than ATP. The ATP gamma phosphate is transferred to the NDP beta phosphate via a ping-pong mechanism, using a phosphorylated active-site intermediate. This chain is Nucleoside diphosphate kinase, found in Acinetobacter baylyi (strain ATCC 33305 / BD413 / ADP1).